Reading from the N-terminus, the 218-residue chain is Uracil-DNA glycosylase (218 aa).

Asp68 serves as the catalytic Proton acceptor.

The protein belongs to the uracil-DNA glycosylase (UDG) superfamily. UNG family. Homodimer. Interacts with protein OPG148. Component of the Uracil-DNA glycosylase(UDG)-OPG148-polymerase complex; OPG148 and UDG form a heterodimeric processivity factor that associates with OPG71 to form the processive polymerase holoenzyme.

It carries out the reaction Hydrolyzes single-stranded DNA or mismatched double-stranded DNA and polynucleotides, releasing free uracil.. In terms of biological role, plays an essential role in viral replication as a component of the DNA polymerase processivity factor. Excises uracil residues from the DNA which can arise as a result of misincorporation of dUMP residues by DNA polymerase or due to deamination of cytosine. This is Uracil-DNA glycosylase (OPG116) from Vaccinia virus (strain Ankara) (VACV).